Consider the following 218-residue polypeptide: Ras-related protein RABA1h (218 aa).

20–27 (GDSGVGKS) is a GTP binding site. An Effector region motif is present at residues 42–50 (SRSTIGVEF). Residues 68–72 (DTAGQ), 126–129 (NKAD), and 156–157 (SA) contribute to the GTP site. Residues cysteine 215 and cysteine 216 are each lipidated (S-geranylgeranyl cysteine).

It belongs to the small GTPase superfamily. Rab family.

The protein resides in the cell membrane. Its function is as follows. Intracellular vesicle trafficking and protein transport. This Arabidopsis thaliana (Mouse-ear cress) protein is Ras-related protein RABA1h (RABA1H).